The primary structure comprises 68 residues: Gallinacin-10 (68 aa).

The N-terminal stretch at 1-19 is a signal peptide; the sequence is MKILCLLFAVLLFLFQAAP. Positions 20–25 are excised as a propeptide; the sequence is GSADPL. 3 disulfide bridges follow: Cys-32-Cys-61, Cys-39-Cys-54, and Cys-44-Cys-62.

Belongs to the beta-defensin family. As to expression, strong expression in the testis, liver, gall bladder and kidney. Also expressed in the ovary and male and female reproductive tracts. Expressed in the ovarian stroma and the theca and granulosa layers of the ovarian follicle.

The protein localises to the secreted. It is found in the cytoplasmic granule. In terms of biological role, has bactericidal activity. This chain is Gallinacin-10 (GAL10), found in Gallus gallus (Chicken).